Here is a 150-residue protein sequence, read N- to C-terminus: Globin-3 (150 aa).

The 140-residue stretch at 11–150 (PLSAAEKTKI…MICILLRSAY (140 aa)) folds into the Globin domain. Positions 74 and 106 each coordinate heme b.

It belongs to the globin family. As to quaternary structure, monomer.

The protein is Globin-3 of Petromyzon marinus (Sea lamprey).